The primary structure comprises 319 residues: Fructokinase (319 aa).

Belongs to the carbohydrate kinase PfkB family. Expressed in swelling stolons and, at higher levels, in developing tubers. Low levels found in leaves and stems from tuberizing plants.

The catalysed reaction is D-fructose + ATP = D-fructose 6-phosphate + ADP + H(+). It participates in glycan biosynthesis; starch biosynthesis. Functionally, may play an important role in maintaining the flux of carbon towards starch formation. The protein is Fructokinase of Solanum tuberosum (Potato).